The following is a 142-amino-acid chain: Small heat shock protein IbpB (142 aa).

In terms of domain architecture, sHSP spans alanine 26–arginine 137.

This sequence belongs to the small heat shock protein (HSP20) family. Homodimer. Forms homomultimers of about 100-150 subunits at optimal growth temperatures. Conformation changes to oligomers at high temperatures or high ionic concentrations. The decrease in size of the multimers is accompanied by an increase in chaperone activity.

The protein resides in the cytoplasm. In terms of biological role, associates with aggregated proteins, together with IbpA, to stabilize and protect them from irreversible denaturation and extensive proteolysis during heat shock and oxidative stress. Aggregated proteins bound to the IbpAB complex are more efficiently refolded and reactivated by the ATP-dependent chaperone systems ClpB and DnaK/DnaJ/GrpE. Its activity is ATP-independent. This Escherichia coli O7:K1 (strain IAI39 / ExPEC) protein is Small heat shock protein IbpB.